Consider the following 306-residue polypeptide: GTPase IMAP family member 1 (306 aa).

The disordered stretch occupies residues 1–21; that stretch reads MGGRKMATDEENVYGLEENAQ. Residues 1–272 are Cytoplasmic-facing; sequence MGGRKMATDE…RLWKWLKSPR (272 aa). The 205-residue stretch at 25–229 folds into the AIG1-type G domain; it reads ESTRRLILVG…YSNEVYELAQ (205 aa). The G1 stretch occupies residues 34–41; it reads GRTGAGKS. GTP-binding positions include 34 to 42 and S55; that span reads GRTGAGKSA. Residues 61–65 form a G2 region; sequence SVTRA. The G3 stretch occupies residues 82 to 85; the sequence is DTPD. A G4 region spans residues 152 to 155; that stretch reads TRKE. GTP is bound by residues 153–155 and N190; that span reads RKE. Residues 189 to 191 are G5; that stretch reads DNR. The helical; Anchor for type IV membrane protein transmembrane segment at 273-292 threads the bilayer; it reads SWRLGLALLLGGALLFWVLL. Residues 293 to 306 lie on the Lumenal side of the membrane; the sequence is HRRWSEAVAEVGPD.

The protein belongs to the TRAFAC class TrmE-Era-EngA-EngB-Septin-like GTPase superfamily. AIG1/Toc34/Toc159-like paraseptin GTPase family. IAN subfamily. Predominantly expressed in the spleen and to a lesser extent in the lymph nodes. Detected in T-cells.

It localises to the endoplasmic reticulum membrane. The protein resides in the golgi apparatus membrane. May regulate lymphocyte survival. Required for normal levels of mature T-lymphocytes and mature B-cells. This chain is GTPase IMAP family member 1 (GIMAP1), found in Homo sapiens (Human).